Reading from the N-terminus, the 158-residue chain is MVDKVPMTQGGFVKLQEELRWRQQEERPRIIEAIAEARAHGDLSENAEYHAAKEAQSHNEGRITELEDLTARAEVIDLTKMSGDKIKFGAKVKLVDEDTEEEKTYQIVGDQEADVKAGRISISSPIARALIGKEVGDSIEVNAPGGSKAYEILQVSWG.

It belongs to the GreA/GreB family.

Its function is as follows. Necessary for efficient RNA polymerase transcription elongation past template-encoded arresting sites. The arresting sites in DNA have the property of trapping a certain fraction of elongating RNA polymerases that pass through, resulting in locked ternary complexes. Cleavage of the nascent transcript by cleavage factors such as GreA or GreB allows the resumption of elongation from the new 3'terminus. GreA releases sequences of 2 to 3 nucleotides. This is Transcription elongation factor GreA from Rhizobium etli (strain CIAT 652).